The following is a 238-amino-acid chain: Pyridoxine 5'-phosphate synthase (238 aa).

Asn9 is a binding site for 3-amino-2-oxopropyl phosphate. 11 to 12 (DH) contacts 1-deoxy-D-xylulose 5-phosphate. Arg20 contacts 3-amino-2-oxopropyl phosphate. His45 acts as the Proton acceptor in catalysis. Residues Arg47 and His52 each coordinate 1-deoxy-D-xylulose 5-phosphate. Glu72 functions as the Proton acceptor in the catalytic mechanism. Position 102 (Thr102) interacts with 1-deoxy-D-xylulose 5-phosphate. The active-site Proton donor is the His189. Residues Gly190 and 211 to 212 (GH) contribute to the 3-amino-2-oxopropyl phosphate site.

The protein belongs to the PNP synthase family. In terms of assembly, homooctamer; tetramer of dimers.

It localises to the cytoplasm. The catalysed reaction is 3-amino-2-oxopropyl phosphate + 1-deoxy-D-xylulose 5-phosphate = pyridoxine 5'-phosphate + phosphate + 2 H2O + H(+). It functions in the pathway cofactor biosynthesis; pyridoxine 5'-phosphate biosynthesis; pyridoxine 5'-phosphate from D-erythrose 4-phosphate: step 5/5. In terms of biological role, catalyzes the complicated ring closure reaction between the two acyclic compounds 1-deoxy-D-xylulose-5-phosphate (DXP) and 3-amino-2-oxopropyl phosphate (1-amino-acetone-3-phosphate or AAP) to form pyridoxine 5'-phosphate (PNP) and inorganic phosphate. This chain is Pyridoxine 5'-phosphate synthase, found in Ehrlichia ruminantium (strain Gardel).